We begin with the raw amino-acid sequence, 480 residues long: 6-phosphogluconate dehydrogenase, decarboxylating 1 (480 aa).

Residues 10–15, 33–35, 77–79, and Asn105 contribute to the NADP(+) site; these read GLAVMG, NRT, and VKA. Substrate-binding positions include Asn105 and 131-133; that span reads SGG. Lys186 serves as the catalytic Proton acceptor. 189–190 serves as a coordination point for substrate; sequence HN. The active-site Proton donor is the Glu193. Substrate-binding residues include Tyr194, Lys264, Arg291, Arg450, and His456.

This sequence belongs to the 6-phosphogluconate dehydrogenase family. As to quaternary structure, homodimer. In terms of tissue distribution, highly expressed in inflorescence, lowly expressed in root and embryos and almost absent in leaves.

Its subcellular location is the cytoplasm. It carries out the reaction 6-phospho-D-gluconate + NADP(+) = D-ribulose 5-phosphate + CO2 + NADPH. It participates in carbohydrate degradation; pentose phosphate pathway; D-ribulose 5-phosphate from D-glucose 6-phosphate (oxidative stage): step 3/3. Its function is as follows. Catalyzes the oxidative decarboxylation of 6-phosphogluconate to ribulose 5-phosphate and CO(2), with concomitant reduction of NADP to NADPH. The chain is 6-phosphogluconate dehydrogenase, decarboxylating 1 (G6PGH1) from Oryza sativa subsp. japonica (Rice).